The primary structure comprises 443 residues: D(2) dopamine receptor (443 aa).

The Extracellular segment spans residues 1–37 (MDPLNLSWYDDDLERQNWSRPFNGSDGKADRPHYNYY). Asn5, Asn17, and Asn23 each carry an N-linked (GlcNAc...) asparagine glycan. The helical transmembrane segment at 38–60 (ATLLTLLIAVIVFGNVLVCMAVS) threads the bilayer. Residues 61 to 70 (REKALQTTTN) are Cytoplasmic-facing. A helical transmembrane segment spans residues 71 to 93 (YLIVSLAVADLLVATLVMPWVVY). The Extracellular portion of the chain corresponds to 94–108 (LEVVGEWKFSKIHCD). An intrachain disulfide couples Cys107 to Cys182. Residues 109–130 (IFVTLDVMMCTASILNLCAISI) form a helical membrane-spanning segment. Over 131-151 (DRYTAVAMPMLYNTRYSSKRR) the chain is Cytoplasmic. The helical transmembrane segment at 152 to 172 (VTVMIAIVWVLSFTISCPLLF) threads the bilayer. The Extracellular portion of the chain corresponds to 173–188 (GLNNADQNECIIANPA). The chain crosses the membrane as a helical span at residues 189 to 213 (FVVYSSIVSFYVPFIVTLLVYIKIY). Residues 211 to 373 (KIYIVLRRRR…SQQKEKKATQ (163 aa)) are interaction with PPP1R9B. At 214–373 (IVLRRRRKRV…SQQKEKKATQ (160 aa)) the chain is on the cytoplasmic side. The interval 281–332 (MEMLSSTSPPERTRYSPIPPSHHQLTLPDPSHHGLHSTPDSPAKPEKNGHAK) is disordered. The chain crosses the membrane as a helical span at residues 374–395 (MLAIVLGVFIICWLPFFITHIL). The Extracellular portion of the chain corresponds to 396 to 409 (NIHCDCNIPPVLYS). The cysteines at positions 399 and 401 are disulfide-linked. The chain crosses the membrane as a helical span at residues 410–431 (AFTWLGYVNSAVNPIIYTTFNI). Over 432–443 (EFRKAFLKILHC) the chain is Cytoplasmic. Residue Cys443 is the site of S-palmitoyl cysteine attachment.

It belongs to the G-protein coupled receptor 1 family. In terms of assembly, forms homo- and heterooligomers with DRD4. The interaction with DRD4 may modulate agonist-induced downstream signaling. Interacts with CADPS and CADPS2. Interacts with GPRASP1, PPP1R9B and CLIC6. Interacts with ARRB2. Interacts with HTR2A. Interacts with DRD1. Interacts with KCNA2. Post-translationally, palmitoylated. Palmitoylation which is required for proper localization to the plasma membrane and stability of the receptor could be carried on by ZDHHC4, ZDHHC3 and ZDHHC8.

It localises to the cell membrane. It is found in the golgi apparatus membrane. Its function is as follows. Dopamine receptor whose activity is mediated by G proteins which inhibit adenylyl cyclase. Positively regulates postnatal regression of retinal hyaloid vessels via suppression of VEGFR2/KDR activity, downstream of OPN5. This chain is D(2) dopamine receptor (DRD2), found in Chlorocebus aethiops (Green monkey).